Reading from the N-terminus, the 122-residue chain is Large ribosomal subunit protein uL22 (122 aa).

A disordered region spans residues 102–122 (VAEGKEMKSSKSHKKNQAEGK).

Belongs to the universal ribosomal protein uL22 family. Part of the 50S ribosomal subunit.

Its function is as follows. This protein binds specifically to 23S rRNA; its binding is stimulated by other ribosomal proteins, e.g. L4, L17, and L20. It is important during the early stages of 50S assembly. It makes multiple contacts with different domains of the 23S rRNA in the assembled 50S subunit and ribosome. The globular domain of the protein is located near the polypeptide exit tunnel on the outside of the subunit, while an extended beta-hairpin is found that lines the wall of the exit tunnel in the center of the 70S ribosome. The polypeptide is Large ribosomal subunit protein uL22 (Helicobacter pylori (strain ATCC 700392 / 26695) (Campylobacter pylori)).